A 244-amino-acid polypeptide reads, in one-letter code: Probable phosphatase CA_C0509 (244 aa).

Zn(2+)-binding residues include His8, His10, His16, His41, Glu74, His102, His132, Asp193, and His195.

This sequence belongs to the PHP family. Zn(2+) serves as cofactor.

This Clostridium acetobutylicum (strain ATCC 824 / DSM 792 / JCM 1419 / IAM 19013 / LMG 5710 / NBRC 13948 / NRRL B-527 / VKM B-1787 / 2291 / W) protein is Probable phosphatase CA_C0509.